The following is a 436-amino-acid chain: Probable G-protein coupled receptor C06G4.5 (436 aa).

Residues 1–53 are Extracellular-facing; sequence MSTNLVDYVDDSYLNQSMNSENGLDSVTQIMYDMKKYNIVNDVLPPPNHEDLH. Asn15 carries an N-linked (GlcNAc...) asparagine glycan. Residues 54 to 74 traverse the membrane as a helical segment; that stretch reads VVIMAVSYLLLFLLGTCGNVA. Topologically, residues 75 to 94 are cytoplasmic; the sequence is VLTTIYHVIRSSRATLDNTL. Residues 95 to 115 traverse the membrane as a helical segment; that stretch reads IYVIVLSCVDFGVCLSLPITV. Residues 116 to 132 lie on the Extracellular side of the membrane; it reads IDQILGFWMFGKIPCKL. A helical membrane pass occupies residues 133 to 153; that stretch reads HAVFENFGKILSALILTAMSF. Over 154–171 the chain is Cytoplasmic; sequence DRYAGVCHPQRKRLRSRN. The chain crosses the membrane as a helical span at residues 172-192; it reads FAITILLVLAVYAFITLCPLL. The Extracellular segment spans residues 193–230; it reads WSFTAREIILYAKETAPGMLTRMKIEKCTVDIDSQMFT. Residues 231–251 traverse the membrane as a helical segment; it reads AFTIYQFILCYCTPLVLIAFF. Topologically, residues 252-281 are cytoplasmic; it reads YTKLLSKLREHTRTFKSSQIPFLHISLYTL. Residues 282-302 form a helical membrane-spanning segment; sequence AVACFYFLCWTPFWMATLFAV. The Extracellular portion of the chain corresponds to 303–316; the sequence is YLENSANSSSVPPV. A glycan (N-linked (GlcNAc...) asparagine) is linked at Asn309. Residues 317 to 337 traverse the membrane as a helical segment; that stretch reads FVYIMYFIHALPFTNSAINWI. Over 338-436 the chain is Cytoplasmic; the sequence is LYGALNGQLQ…LLSNHNPTFL (99 aa).

This sequence belongs to the G-protein coupled receptor 1 family.

It is found in the cell membrane. In terms of biological role, putative receptor. The sequence is that of Probable G-protein coupled receptor C06G4.5 from Caenorhabditis elegans.